The primary structure comprises 71 residues: MGYSSSSRIGLCLFLFFTFALLSSARISLSFSENEMTVVPERSLMVSTNDYSDPTANGRHDPPRGGRGRRR.

Positions 1–25 (MGYSSSSRIGLCLFLFFTFALLSSA) are cleaved as a signal peptide. Positions 26-49 (RISLSFSENEMTVVPERSLMVSTN) are excised as a propeptide. Positions 47–71 (STNDYSDPTANGRHDPPRGGRGRRR) are disordered. Tyr-51 bears the Sulfotyrosine mark. Pro-63 bears the 4-hydroxyproline mark. The O-linked (Ara...) hydroxyproline glycan is linked to Pro-63. A propeptide spanning residues 66-71 (GRGRRR) is cleaved from the precursor.

This sequence belongs to the sulfated-peptide plant hormone family. In terms of processing, the sulfation and the glycosylation are required for full activity.

The protein resides in the secreted. In terms of biological role, promotes cellular proliferation and expansion. The protein is Protein PSY3 (PSY3) of Arabidopsis thaliana (Mouse-ear cress).